The following is a 458-amino-acid chain: MYSMEQVVNLAKHRGFVFPGSEIYGGLANTWDYGPLGIELKNNVKKAWWKKFIQESPYNVGLDAAILMNPKTWIASGHVGNFNDPMIDCKKCKARHRADKLIEDALDAKGIEMVVDGLTFDQMADLMKEHEVKCPDCGSEEFTEIRQFNLMFKTFQGVTESSTNEIFLRPETAQGIFVNFKNVQRSMRKKLPFGIGQIGKSFRNEITPGNFTFRTREFEQMELEFFCKPGEDLEWFAFWRETCKNWLLSLGMTEESMRLRDHGEEELSHYSNATTDIEFKFPFGWGELWGVASRTDFDLKRHMEHSNEDFNYIDPQTNERYVPYCIEPSLGADRVTLAFLCDAYEEEQLENDSRTVLRFHPALAPYKAAILPLSKKLSEGATEVFAELAKDFMVDFDETGSIGKRYRRQDEIGTPFCITYDFDSVEDKAVTVRDRDTMEQVRMPISELKGFLEKKIQF.

Arg-97 and Glu-171 together coordinate substrate. Residues 203 to 205 (RNE), 213 to 218 (FRTREF), 287 to 288 (EL), and 331 to 334 (GADR) each bind ATP. Substrate is bound at residue 218-222 (FEQME). 327–331 (EPSLG) provides a ligand contact to substrate.

It belongs to the class-II aminoacyl-tRNA synthetase family. In terms of assembly, homodimer.

The protein localises to the cytoplasm. It carries out the reaction tRNA(Gly) + glycine + ATP = glycyl-tRNA(Gly) + AMP + diphosphate. Functionally, catalyzes the attachment of glycine to tRNA(Gly). The polypeptide is Glycine--tRNA ligase (Bacillus anthracis).